We begin with the raw amino-acid sequence, 452 residues long: tRNA modification GTPase MnmE (452 aa).

Arginine 25, glutamate 82, and arginine 125 together coordinate (6S)-5-formyl-5,6,7,8-tetrahydrofolate. In terms of domain architecture, TrmE-type G spans 221-374; sequence GLHVVLAGKP…LRARLLALAG (154 aa). A K(+)-binding site is contributed by asparagine 231. GTP contacts are provided by residues 231–236, 250–256, 275–278, and 355–357; these read NVGKSS, TPIAGTT, DTAG, and SAR. Residue serine 235 coordinates Mg(2+). K(+) contacts are provided by threonine 250, isoleucine 252, and threonine 255. Residue threonine 256 participates in Mg(2+) binding. Lysine 452 provides a ligand contact to (6S)-5-formyl-5,6,7,8-tetrahydrofolate.

The protein belongs to the TRAFAC class TrmE-Era-EngA-EngB-Septin-like GTPase superfamily. TrmE GTPase family. As to quaternary structure, homodimer. Heterotetramer of two MnmE and two MnmG subunits. The cofactor is K(+).

It localises to the cytoplasm. In terms of biological role, exhibits a very high intrinsic GTPase hydrolysis rate. Involved in the addition of a carboxymethylaminomethyl (cmnm) group at the wobble position (U34) of certain tRNAs, forming tRNA-cmnm(5)s(2)U34. This is tRNA modification GTPase MnmE from Bordetella petrii (strain ATCC BAA-461 / DSM 12804 / CCUG 43448).